The primary structure comprises 649 residues: 2-hydroxyacyl-CoA lyase 2 (649 aa).

The chain crosses the membrane as a helical span at residues 2 to 21 (FHLIPFVVAFLLVFLTWFLI). Thiamine diphosphate is bound at residue Glu-84. A thiamine pyrophosphate binding region spans residues 474 to 554 (DFVGSAAYIL…AIGVIGNDAC (81 aa)). Positions 525 and 551 each coordinate Mg(2+).

Belongs to the TPP enzyme family. Requires Mg(2+) as cofactor. Thiamine diphosphate is required as a cofactor.

It is found in the endoplasmic reticulum membrane. The catalysed reaction is 2-hydroxyoctadecanoyl-CoA = heptadecanal + formyl-CoA. The enzyme catalyses (2R)-hydroxyhexadecanoyl-CoA = pentadecanal + formyl-CoA. Its function is as follows. Endoplasmic reticulum 2-OH acyl-CoA lyase involved in the cleavage (C1 removal) reaction in the fatty acid alpha-oxydation in a thiamine pyrophosphate (TPP)-dependent manner. Involved in the phytosphingosine degradation pathway. The polypeptide is 2-hydroxyacyl-CoA lyase 2 (ilvbl) (Xenopus laevis (African clawed frog)).